A 636-amino-acid chain; its full sequence is Ketocytochalasin monooxygenase (636 aa).

Residues Asp-125, 133–136 (TWYW), Asp-145, Tyr-151, and Ile-195 contribute to the FAD site. 143–145 (ACD) is an NADP(+) binding site. NADP(+)-binding positions include 279-285 (TGASAVQ), 302-303 (RT), and 420-421 (KR). Trp-534 provides a ligand contact to FAD.

It belongs to the FAD-binding monooxygenase family. It depends on FAD as a cofactor.

It catalyses the reaction ketocytochalasin + NADPH + O2 + H(+) = iso-precytochalasin + NADP(+) + H2O. The catalysed reaction is iso-precytochalasin + NADPH + O2 + H(+) = cytochalasin Z16 + NADP(+) + H2O. It participates in mycotoxin biosynthesis. Its function is as follows. Ketocytochalasin monooxygenase; part of the gene cluster that mediates the biosynthesis of a family of the mycotoxins cytochalasins E and K. The hybrid PKS-NRPS synthetase ccsA and the enoyl reductase ccsC are responsible for fusion of phenylalanine with an octaketide backbone and subsequent release of the stable tetramic acid precursor. The polyketide synthase module (PKS) of the PKS-NRPS ccsA is responsible for the synthesis of the octaketide backbone. The downstream nonribosomal peptide synthetase (NRPS) amidates the carboxyl end of the octaketide with a phenylalanine. A reductase-like domain (R) at the C-terminus catalyzes the reductive release of the polyketide-amino acid intermediate. Because ccsA lacks a designated enoylreductase (ER) domain, the required activity is provided the enoyl reductase ccsC. Upon formation of the 11-membered carbocycle-fused perhydroisoindolone intermediate, a number of oxidative steps are required to afford the final cytochalasin E and K, including two hydroxylations at C17 and C18, one alcohol oxidation at C17, one epoxidation at C6 and C7 and two Baeyer-Villiger oxidations. The oxidative modification at C17, C18 and the C6-C7 epoxidation are likely to be catalyzed by the two cytochrome P450 oxygenases ccsD and ccsG. CcsD may be responsible for the epoxidation of the C6-C7 double bond. CcsG may be responsible for the successive oxidative modifications at C17 and C18. The double Baeyer-Villiger oxidations of ketocytochalasin to precytochalasin and cytochalasin Z(16) are among the final steps leading to cytochalasin E and K and are catalyzed by ccsB. The first oxygen insertion step follows that of the classic BVMO mechanism, generating the ester precytochalasin. Release of precytochalasin into an aqueous environment can generate the shunt product iso-precytochalasin through spontaneous isomerization. Alternatively, precytochalasin can undergo further oxidation by ccsB to yield the in-line carbonate-containing cytochalasin Z(16). Cytochalasin Z(16) is a precursor to cytochalasin E and cytochalasin K, whereas iso-precytochalasin is a precursor to cytochalasin Z(17) and rosellichalasin. The hydrolyase ccsE may catalyze hydrolysis of epoxide bond in cytochalasin E to afford cytochalasin K. The function of ccsF has not been assigned but it may play a role in post-PKS-NRPS biosynthetic step, resistance or transport of cytochalasins and related PKS-NRPS products. The sequence is that of Ketocytochalasin monooxygenase from Aspergillus clavatus (strain ATCC 1007 / CBS 513.65 / DSM 816 / NCTC 3887 / NRRL 1 / QM 1276 / 107).